The primary structure comprises 117 residues: Small ribosomal subunit protein bS6 (117 aa).

The protein belongs to the bacterial ribosomal protein bS6 family.

Functionally, binds together with bS18 to 16S ribosomal RNA. The polypeptide is Small ribosomal subunit protein bS6 (Trichodesmium erythraeum (strain IMS101)).